Reading from the N-terminus, the 435-residue chain is Serine--tRNA ligase (435 aa).

Residue 241–243 participates in L-serine binding; sequence TAE. 272–274 is an ATP binding site; sequence RSE. E295 is a binding site for L-serine. 359–362 serves as a coordination point for ATP; sequence EISS. S395 contacts L-serine.

This sequence belongs to the class-II aminoacyl-tRNA synthetase family. Type-1 seryl-tRNA synthetase subfamily. As to quaternary structure, homodimer. The tRNA molecule binds across the dimer.

It is found in the cytoplasm. The enzyme catalyses tRNA(Ser) + L-serine + ATP = L-seryl-tRNA(Ser) + AMP + diphosphate + H(+). The catalysed reaction is tRNA(Sec) + L-serine + ATP = L-seryl-tRNA(Sec) + AMP + diphosphate + H(+). It functions in the pathway aminoacyl-tRNA biosynthesis; selenocysteinyl-tRNA(Sec) biosynthesis; L-seryl-tRNA(Sec) from L-serine and tRNA(Sec): step 1/1. Catalyzes the attachment of serine to tRNA(Ser). Is also able to aminoacylate tRNA(Sec) with serine, to form the misacylated tRNA L-seryl-tRNA(Sec), which will be further converted into selenocysteinyl-tRNA(Sec). This Actinobacillus pleuropneumoniae serotype 7 (strain AP76) protein is Serine--tRNA ligase.